A 664-amino-acid polypeptide reads, in one-letter code: ATP-dependent zinc metalloprotease FtsH (664 aa).

The Cytoplasmic segment spans residues 1 to 9 (MKQNIKRNW). The chain crosses the membrane as a helical span at residues 10-30 (IWILIVMIVIGIILYFSIRNL). At 31–136 (FSTKVAEWSI…KSVATPQPNP (106 aa)) the chain is on the extracellular side. Residues 137–157 (FLGILISSVPVLILIFVMVWI) traverse the membrane as a helical segment. Over 158 to 664 (YRSQVKMMNG…SLIEKTSKKE (507 aa)) the chain is Cytoplasmic. 229–236 (GPPGTGKT) is an ATP binding site. A Zn(2+)-binding site is contributed by His451. Residue Glu452 is part of the active site. The Zn(2+) site is built by His455 and Asp529. The segment covering 639-649 (IEEKDLSKNSE) has biased composition (basic and acidic residues). The segment at 639-664 (IEEKDLSKNSEDNNLDSLIEKTSKKE) is disordered.

It in the central section; belongs to the AAA ATPase family. In the C-terminal section; belongs to the peptidase M41 family. Homohexamer. Zn(2+) serves as cofactor.

It is found in the cell membrane. Functionally, acts as a processive, ATP-dependent zinc metallopeptidase for both cytoplasmic and membrane proteins. Plays a role in the quality control of integral membrane proteins. The protein is ATP-dependent zinc metalloprotease FtsH of Mycoplasmopsis synoviae (strain 53) (Mycoplasma synoviae).